We begin with the raw amino-acid sequence, 180 residues long: Translation initiation factor IF-3 (180 aa).

Belongs to the IF-3 family. In terms of assembly, monomer.

The protein localises to the cytoplasm. IF-3 binds to the 30S ribosomal subunit and shifts the equilibrium between 70S ribosomes and their 50S and 30S subunits in favor of the free subunits, thus enhancing the availability of 30S subunits on which protein synthesis initiation begins. The protein is Translation initiation factor IF-3 of Salmonella typhimurium (strain LT2 / SGSC1412 / ATCC 700720).